Consider the following 190-residue polypeptide: Protein A52 (190 aa).

The protein belongs to the orthopoxvirus A52R protein family. Interacts with host TRAF6 and IRAK2.

In terms of biological role, bcl-2-like protein which targets host toll-like receptor signaling complexes to suppress innate immune response. Interacts with host TRAF6 to activate p38 and subsequently induce the expression of several cytokines such as IL-10. Also associates with host IRAK2 to inhibit NF-kappa-B signaling. The sequence is that of Protein A52 from Vaccinia virus (strain Western Reserve) (VACV).